Here is a 404-residue protein sequence, read N- to C-terminus: Acetate kinase (404 aa).

N7 contacts Mg(2+). Position 14 (K14) interacts with ATP. Residue R91 coordinates substrate. Residue D148 is the Proton donor/acceptor of the active site. Residues 208 to 212 and 283 to 285 contribute to the ATP site; these read HLGNG and DLR. E388 is a Mg(2+) binding site.

This sequence belongs to the acetokinase family. Homodimer. Mg(2+) serves as cofactor. It depends on Mn(2+) as a cofactor.

It localises to the cytoplasm. The catalysed reaction is acetate + ATP = acetyl phosphate + ADP. It participates in metabolic intermediate biosynthesis; acetyl-CoA biosynthesis; acetyl-CoA from acetate: step 1/2. Catalyzes the formation of acetyl phosphate from acetate and ATP. Can also catalyze the reverse reaction. In Borrelia turicatae (strain 91E135), this protein is Acetate kinase.